We begin with the raw amino-acid sequence, 181 residues long: UPF0397 protein STER_0346 (181 aa).

5 helical membrane passes run 11-31, 45-65, 72-92, 109-129, and 147-167; these read ATGI…IPIF, LFSV…GHAL, GNIS…IGLF, IWFN…VTPI, and FVAG…LLAI.

Belongs to the UPF0397 family.

Its subcellular location is the cell membrane. This is UPF0397 protein STER_0346 from Streptococcus thermophilus (strain ATCC BAA-491 / LMD-9).